We begin with the raw amino-acid sequence, 310 residues long: Isoaspartyl peptidase/L-asparaginase (310 aa).

T167 (nucleophile) is an active-site residue. Substrate is bound by residues 195–198 and 218–221; these read RVGD and TGHG.

The protein belongs to the Ntn-hydrolase family. As to quaternary structure, heterodimer of an alpha and beta chain produced by autocleavage. Cleaved into an alpha and beta chain by autocatalysis; this activates the enzyme. The N-terminal residue of the beta subunit is responsible for the nucleophile hydrolase activity.

Its subcellular location is the cytoplasm. It catalyses the reaction L-asparagine + H2O = L-aspartate + NH4(+). The enzyme catalyses Cleavage of a beta-linked Asp residue from the N-terminus of a polypeptide.. Its function is as follows. Has both L-asparaginase and beta-aspartyl peptidase activity. Does not have aspartylglucosaminidase activity and is inactive toward GlcNAc-L-Asn. Likewise, has no activity toward glutamine. This is Isoaspartyl peptidase/L-asparaginase (asrgl1) from Danio rerio (Zebrafish).